The primary structure comprises 313 residues: Ribonuclease Z (313 aa).

Zn(2+) is bound by residues His-62, His-64, Asp-66, His-67, His-142, Asp-212, and His-270. Asp-66 acts as the Proton acceptor in catalysis.

This sequence belongs to the RNase Z family. As to quaternary structure, homodimer. Zn(2+) serves as cofactor.

It catalyses the reaction Endonucleolytic cleavage of RNA, removing extra 3' nucleotides from tRNA precursor, generating 3' termini of tRNAs. A 3'-hydroxy group is left at the tRNA terminus and a 5'-phosphoryl group is left at the trailer molecule.. Zinc phosphodiesterase, which displays some tRNA 3'-processing endonuclease activity. Probably involved in tRNA maturation, by removing a 3'-trailer from precursor tRNA. This is Ribonuclease Z from Cytophaga hutchinsonii (strain ATCC 33406 / DSM 1761 / CIP 103989 / NBRC 15051 / NCIMB 9469 / D465).